Here is a 146-residue protein sequence, read N- to C-terminus: Hemoglobin subunit beta (146 aa).

N-acetylvaline is present on valine 1. Residues 2-146 (HLTAEEKDAV…VANALAHRYH (145 aa)) enclose the Globin domain. Serine 44 carries the phosphoserine modification. An N6-acetyllysine modification is found at lysine 59. Histidine 63 provides a ligand contact to heme b. Residue lysine 82 is modified to N6-acetyllysine. Position 92 (histidine 92) interacts with heme b. An S-nitrosocysteine modification is found at cysteine 93.

This sequence belongs to the globin family. Heterotetramer of two alpha chains and two beta chains. In terms of tissue distribution, red blood cells.

Involved in oxygen transport from the lung to the various peripheral tissues. The polypeptide is Hemoglobin subunit beta (HBB) (Hippopotamus amphibius (Hippopotamus)).